We begin with the raw amino-acid sequence, 428 residues long: Divergent protein kinase domain 1A (428 aa).

Over 1–27 (MARSLCAGAWLRKPHYLQARLSYMRVK) the chain is Cytoplasmic. The helical transmembrane segment at 28–48 (YLFFSWLVVFVGSWIIYVQYS) threads the bilayer. Topologically, residues 49-428 (TYTELCRGKD…WKKISYTNDS (380 aa)) are lumenal.

Belongs to the DIPK family. In terms of processing, among the many cysteines in the lumenal domain, most are probably involved in disulfide bonds. Ubiquitous.

It is found in the endoplasmic reticulum membrane. The protein is Divergent protein kinase domain 1A (Dipk1a) of Mus musculus (Mouse).